We begin with the raw amino-acid sequence, 278 residues long: UPF0761 membrane protein CBU_1578 (278 aa).

Helical transmembrane passes span 38-58, 68-88, 92-112, 134-154, 177-197, 207-227, and 244-264; these read LLAL…VPAF, LIWE…LSQL, VTGL…LLMY, FLIY…VMLL, LLFV…NWVL, AVIG…AFTV, and VIPI…LGAV.

It belongs to the UPF0761 family.

The protein localises to the cell inner membrane. The protein is UPF0761 membrane protein CBU_1578 of Coxiella burnetii (strain RSA 493 / Nine Mile phase I).